The following is a 288-amino-acid chain: CBY1-interacting BAR domain-containing protein 2 (288 aa).

A BAR-like region spans residues S6–E217. 2 disordered regions span residues Q133–S157 and T256–Q288. Polar residues predominate over residues D138 to S157. Over residues S266–V276 the composition is skewed to acidic residues.

The protein belongs to the CIBAR family. As to quaternary structure, homodimer (via BAR-like domain). Heterodimer (via BAR-like domain) with FAM92A. Interacts with CBY1.

Its subcellular location is the cytoplasm. The protein resides in the cytoskeleton. The protein localises to the microtubule organizing center. It localises to the centrosome. It is found in the centriole. Its subcellular location is the cilium basal body. May play a role in ciliogenesis. In cooperation with CBY1 may facilitate ciliogenesis likely by the recruitment and fusion of endosomal vesicles at distal appendages during early stages of ciliogenesis. The protein is CBY1-interacting BAR domain-containing protein 2 (CIBAR2) of Bos taurus (Bovine).